Here is a 142-residue protein sequence, read N- to C-terminus: MKTFVAKPETVKRDWYVVDAEGKTLGRLASEIASRLRGKHKAEYTPHVDTGDYIIVVNAEKVTVTGNKAKNKMYHRHSEFPGGLKSFSFEKLIERKPEMVLELAVKGMLPKGPLGRAMYRKLKVYAGAEHNHAAQQPKVLDI.

This sequence belongs to the universal ribosomal protein uL13 family. Part of the 50S ribosomal subunit.

Its function is as follows. This protein is one of the early assembly proteins of the 50S ribosomal subunit, although it is not seen to bind rRNA by itself. It is important during the early stages of 50S assembly. This Vibrio cholerae serotype O1 (strain M66-2) protein is Large ribosomal subunit protein uL13.